Reading from the N-terminus, the 110-residue chain is Protein RnfH (110 aa).

Residues 86 to 110 form a disordered region; that stretch reads RQRRVEKTRKAGSIEGRRWQNKDSR. Residues 100–110 show a composition bias toward basic and acidic residues; the sequence is EGRRWQNKDSR.

This sequence belongs to the UPF0125 (RnfH) family.

This chain is Protein RnfH, found in Paraburkholderia xenovorans (strain LB400).